Here is a 704-residue protein sequence, read N- to C-terminus: Methionine--tRNA ligase (704 aa).

Positions 17 to 27 (PYANGPIHLGH) match the 'HIGH' region motif. Zn(2+)-binding residues include Cys148, Cys151, Cys161, and Cys164. Residues 348-352 (KMSKS) carry the 'KMSKS' region motif. ATP is bound at residue Lys351. The region spanning 603–704 (ELSKVELRVG…KDAKPGDRLK (102 aa)) is the tRNA-binding domain.

It belongs to the class-I aminoacyl-tRNA synthetase family. MetG type 1 subfamily. Homodimer. The cofactor is Zn(2+).

Its subcellular location is the cytoplasm. It carries out the reaction tRNA(Met) + L-methionine + ATP = L-methionyl-tRNA(Met) + AMP + diphosphate. Functionally, is required not only for elongation of protein synthesis but also for the initiation of all mRNA translation through initiator tRNA(fMet) aminoacylation. The polypeptide is Methionine--tRNA ligase (Leptospira borgpetersenii serovar Hardjo-bovis (strain L550)).